Here is a 102-residue protein sequence, read N- to C-terminus: MYAIVKAGGHQEKVEVGDTILVNRLDAKNGETVEFPVALVVDGEKVIIAAADLAKISVKAEVVNDDAKGPKIRIQKFKNKTGVARRKGHRQKLTQLKITAIA.

The protein belongs to the bacterial ribosomal protein bL21 family. Part of the 50S ribosomal subunit. Contacts protein L20.

Functionally, this protein binds to 23S rRNA in the presence of protein L20. This Bifidobacterium animalis subsp. lactis (strain AD011) protein is Large ribosomal subunit protein bL21.